Consider the following 315-residue polypeptide: 4-hydroxy-3-methylbut-2-enyl diphosphate reductase (315 aa).

Cysteine 12 is a binding site for [4Fe-4S] cluster. Residues histidine 41 and histidine 74 each coordinate (2E)-4-hydroxy-3-methylbut-2-enyl diphosphate. Histidine 41 and histidine 74 together coordinate dimethylallyl diphosphate. 2 residues coordinate isopentenyl diphosphate: histidine 41 and histidine 74. Cysteine 96 is a binding site for [4Fe-4S] cluster. Histidine 124 is a (2E)-4-hydroxy-3-methylbut-2-enyl diphosphate binding site. Histidine 124 lines the dimethylallyl diphosphate pocket. Position 124 (histidine 124) interacts with isopentenyl diphosphate. Glutamate 126 serves as the catalytic Proton donor. Threonine 168 contacts (2E)-4-hydroxy-3-methylbut-2-enyl diphosphate. Cysteine 198 is a binding site for [4Fe-4S] cluster. The (2E)-4-hydroxy-3-methylbut-2-enyl diphosphate site is built by serine 226, serine 227, asparagine 228, and serine 270. Dimethylallyl diphosphate is bound by residues serine 226, serine 227, asparagine 228, and serine 270. Isopentenyl diphosphate contacts are provided by serine 226, serine 227, asparagine 228, and serine 270.

It belongs to the IspH family. It depends on [4Fe-4S] cluster as a cofactor.

The enzyme catalyses isopentenyl diphosphate + 2 oxidized [2Fe-2S]-[ferredoxin] + H2O = (2E)-4-hydroxy-3-methylbut-2-enyl diphosphate + 2 reduced [2Fe-2S]-[ferredoxin] + 2 H(+). The catalysed reaction is dimethylallyl diphosphate + 2 oxidized [2Fe-2S]-[ferredoxin] + H2O = (2E)-4-hydroxy-3-methylbut-2-enyl diphosphate + 2 reduced [2Fe-2S]-[ferredoxin] + 2 H(+). It functions in the pathway isoprenoid biosynthesis; dimethylallyl diphosphate biosynthesis; dimethylallyl diphosphate from (2E)-4-hydroxy-3-methylbutenyl diphosphate: step 1/1. It participates in isoprenoid biosynthesis; isopentenyl diphosphate biosynthesis via DXP pathway; isopentenyl diphosphate from 1-deoxy-D-xylulose 5-phosphate: step 6/6. Catalyzes the conversion of 1-hydroxy-2-methyl-2-(E)-butenyl 4-diphosphate (HMBPP) into a mixture of isopentenyl diphosphate (IPP) and dimethylallyl diphosphate (DMAPP). Acts in the terminal step of the DOXP/MEP pathway for isoprenoid precursor biosynthesis. The chain is 4-hydroxy-3-methylbut-2-enyl diphosphate reductase from Pseudomonas syringae pv. tomato (strain ATCC BAA-871 / DC3000).